The chain runs to 96 residues: Dynein light chain roadblock-type 2 (96 aa).

At Ala-2 the chain carries N-acetylalanine.

This sequence belongs to the GAMAD family. As to quaternary structure, homodimer. The cytoplasmic dynein 1 complex consists of two catalytic heavy chains (HCs) and a number of non-catalytic subunits presented by intermediate chains (ICs), light intermediate chains (LICs) and light chains (LCs); the composition seems to vary in respect to the IC, LIC and LC composition. The heavy chain homodimer serves as a scaffold for the probable homodimeric assembly of the respective non-catalytic subunits. The ICs and LICs bind directly to the HC dimer and the LCs assemble on the IC dimer. Interacts with DYNC1I1 and DYNC1I2. Self-associates. Interacts with DYNLRB1. High expression in heart, brain, placenta, skeletal muscle, prostate and small intestine; moderate in kidney, pancreas, spleen, testis, ovary and colon; low in lung, liver, thymus and leukocyte.

It is found in the cytoplasm. The protein resides in the cytoskeleton. Its function is as follows. Acts as one of several non-catalytic accessory components of the cytoplasmic dynein 1 complex that are thought to be involved in linking dynein to cargos and to adapter proteins that regulate dynein function. Cytoplasmic dynein 1 acts as a motor for the intracellular retrograde motility of vesicles and organelles along microtubules. The sequence is that of Dynein light chain roadblock-type 2 (DYNLRB2) from Homo sapiens (Human).